Here is a 104-residue protein sequence, read N- to C-terminus: Turripeptide OL55 (104 aa).

Contains 8 disulfide bonds. Expressed by the venom duct.

It localises to the secreted. In terms of biological role, acts as a neurotoxin by inhibiting an ion channel. The polypeptide is Turripeptide OL55 (Iotyrris olangoensis (Sea snail)).